Consider the following 414-residue polypeptide: Probable 1-acylglycerol-3-phosphate O-acyltransferase (414 aa).

One can recognise an AB hydrolase-1 domain in the interval 117-382 (PTLVMVHGYG…GGHFVFIDNP (266 aa)). The GXSXG signature appears at 193-197 (GHSFG). Residues 375 to 380 (HFVFID) carry the HXXXXD motif motif.

Belongs to the peptidase S33 family. ABHD4/ABHD5 subfamily.

The protein resides in the cytoplasm. The enzyme catalyses a 1-acyl-sn-glycero-3-phosphate + an acyl-CoA = a 1,2-diacyl-sn-glycero-3-phosphate + CoA. Lysophosphatidic acid acyltransferase which functions in phosphatidic acid biosynthesis. May regulate neutral lipid accumulation and participate in the regulation of lipid turnover in vegetative cells. May possess additional triacylglycerol lipase and phospholipase A2 activities in vitro. In Oryza sativa subsp. japonica (Rice), this protein is Probable 1-acylglycerol-3-phosphate O-acyltransferase.